Reading from the N-terminus, the 623-residue chain is Immunity-related GTPase family Q protein (623 aa).

C152 and C158 form a disulfide bridge. Residues 155-180 are a coiled coil; it reads SDGCEELERLRAALQSQAEALRRLLP. Positions 186–189 match the LIR 1 motif; it reads FEVL. T203 bears the Phosphothreonine mark. The 227-residue stretch at 223–449 folds into the IRG-type G domain; the sequence is ARLDLAVAGK…PGLCEWLRRA (227 aa). Residues 334–393 form a disordered region; the sequence is EGEDPECLGEGKMENPKGESLKNAGGGGLENALSKGREKCSAGSQKAGSGEGPGKAGSEG. A compositionally biased stretch (basic and acidic residues) spans 342-353; that stretch reads GEGKMENPKGES. An LIR 2 motif is present at residues 421-424; the sequence is WEVL.

This sequence belongs to the TRAFAC class dynamin-like GTPase superfamily. IRG family. As to quaternary structure, interacts (via LIR motif 1) with GABARAPL2. Interacts (via LIR motif 2) with MAP1LC3B/LC3B.

The protein resides in the lysosome. It localises to the cytoplasmic vesicle. It is found in the autophagosome. Autophagy receptor that specifically promotes clearance of misfolded MHC class I molecules by targeting them to the lysosome for degradation. Acts as a molecular adapter that specifically recognizes and binds (1) misfolded MHC class I molecules following their ubiquitination, as well as (2) autophagy-related proteins, promoting the recruitment of misfolded MHC class I molecules to autophagy machinery for degradation. Degradation of misfolded MHC class I molecules is essential to prevent accumulation of defective MHC class I complexes at the surface of CD8(+) T-cells and prevent a stronger T-cell-mediated response. In contrast to other members of the family, does not show GTPase activity. This is Immunity-related GTPase family Q protein from Homo sapiens (Human).